We begin with the raw amino-acid sequence, 218 residues long: Mitochondrial fission factor (218 aa).

Residues 1–198 (MAEISRIQYE…ENKERAKREM (198 aa)) are Cytoplasmic-facing. Residue threonine 89 is modified to Phosphothreonine. Phosphoserine is present on residues serine 129, serine 131, serine 146, and serine 171. Residues 167-198 (VDAASLRRQIIKLNRRLQLLEEENKERAKREM) are a coiled coil. Residues 199-216 (VMYSITVAFWLLNSWLWF) traverse the membrane as a helical; Anchor for type IV membrane protein segment. Over 217–218 (RR) the chain is Mitochondrial intermembrane.

The protein belongs to the Tango11 family. In terms of assembly, homodimer. Interacts with DNM1L. Interacts with C11orf65/MFI; the interaction inhibits MFF interaction with DNM1L.

The protein localises to the mitochondrion outer membrane. It is found in the peroxisome. Its subcellular location is the cytoplasmic vesicle. It localises to the secretory vesicle. The protein resides in the synaptic vesicle. Functionally, plays a role in mitochondrial and peroxisomal fission. Promotes the recruitment and association of the fission mediator dynamin-related protein 1 (DNM1L) to the mitochondrial surface. May be involved in regulation of synaptic vesicle membrane dynamics by recruitment of DNM1L to clathrin-containing vesicles. This is Mitochondrial fission factor (MFF) from Bos taurus (Bovine).